The primary structure comprises 115 residues: Large ribosomal subunit protein bL20c (115 aa).

It belongs to the bacterial ribosomal protein bL20 family.

The protein resides in the plastid. The protein localises to the chloroplast. Binds directly to 23S ribosomal RNA and is necessary for the in vitro assembly process of the 50S ribosomal subunit. It is not involved in the protein synthesizing functions of that subunit. This is Large ribosomal subunit protein bL20c from Pyropia yezoensis (Susabi-nori).